The chain runs to 128 residues: Lutropin subunit beta (128 aa).

The N-terminal stretch at 1-20 is a signal peptide; sequence MERLQGLLLWLLLSPSVVWA. Disulfide bonds link Cys-29/Cys-77, Cys-43/Cys-92, Cys-54/Cys-108, Cys-58/Cys-110, and Cys-113/Cys-120. Asn-33 carries an N-linked (GlcNAc...) asparagine glycan.

Belongs to the glycoprotein hormones subunit beta family. Heterodimer of a common alpha chain and a unique beta chain which confers biological specificity to thyrotropin, lutropin, follitropin and gonadotropin.

It is found in the secreted. Functionally, promotes spermatogenesis and ovulation by stimulating the testes and ovaries to synthesize steroids. This Phodopus sungorus (Striped hairy-footed hamster) protein is Lutropin subunit beta (LHB).